The sequence spans 143 residues: Transcription antitermination protein NusB (143 aa).

It belongs to the NusB family.

Involved in transcription antitermination. Required for transcription of ribosomal RNA (rRNA) genes. Binds specifically to the boxA antiterminator sequence of the ribosomal RNA (rrn) operons. The chain is Transcription antitermination protein NusB from Buchnera aphidicola subsp. Acyrthosiphon pisum (strain APS) (Acyrthosiphon pisum symbiotic bacterium).